Here is a 417-residue protein sequence, read N- to C-terminus: MLLSVPLLLGLLGLAVAEPAVYFKEQFLDGDGWTSRWIESKHKSDFGKFVLSSGKFYGDEEKDKGLQTSQDARFYALSASFEPFSNKGQTLVVQFTVKHEQNIDCGGGYVKLFPNSLDQTDMHGDSEYNIMFGPDICGPGTKKVHVIFNYKGKNVLINKDIRCKDDEFTHLYTLIVRPDNTYEVKIDNSQVESGSLEDDWDFLPPKKIKDPDASKPEDWDERAKIDDPTDSKPEDWDKPEHIPDPDAKKPEDWDEEMDGEWEPPVIQNPEYKGEWKPRQIDNPDYKGTWIHPEIDNPEYSPDPSIYAYDNFGVLGLDLWQVKSGTIFDNFLITNDEAYAEEFGNETWGVTKAAEKQMKDKQDEEQRLKEEEEDKKRKEEEEAEDKEDDEDKDEDEEDEEDKEEDEEEDVPGQAKDEL.

A signal peptide spans 1 to 17 (MLLSVPLLLGLLGLAVA). Positions 18 to 197 (EPAVYFKEQF…NSQVESGSLE (180 aa)) are N-domain. Ca(2+) is bound at residue glutamine 26. An N6-acetyllysine modification is found at lysine 48. Ca(2+) is bound by residues lysine 62 and lysine 64. Lysine 64 is modified (N6-(2-hydroxyisobutyryl)lysine). A disulfide bond links cysteine 105 and cysteine 137. An alpha-D-glucoside contacts are provided by tyrosine 109, lysine 111, tyrosine 128, and aspartate 135. Lysine 159 bears the N6-acetyllysine mark. One copy of the 1-1 repeat lies at 191 to 202 (VESGSLEDDWDF). Residues 191–255 (VESGSLEDDW…DAKKPEDWDE (65 aa)) form a 4 X approximate repeats region. Residues 193 to 278 (SGSLEDDWDF…PEYKGEWKPR (86 aa)) are disordered. A P-domain region spans residues 198-308 (DDWDFLPPKK…YSPDPSIYAY (111 aa)). Residues 207–251 (KIKDPDASKPEDWDERAKIDDPTDSKPEDWDKPEHIPDPDAKKPE) are compositionally biased toward basic and acidic residues. N6-acetyllysine is present on lysine 209. 6 tandem repeats follow at residues 210–221 (DPDASKPEDWDE), 227–238 (DPTDSKPEDWDK), 244–255 (DPDAKKPEDWDE), 259–269 (GEWEPPVIQNP), 273–283 (GEWKPRQIDNP), and 287–297 (GTWIHPEIDNP). The segment at 237–270 (DKPEHIPDPDAKKPEDWDEEMDGEWEPPVIQNPE) is interaction with PPIB. Residues 252 to 261 (DWDEEMDGEW) are compositionally biased toward acidic residues. The tract at residues 259–297 (GEWEPPVIQNPEYKGEWKPRQIDNPDYKGTWIHPEIDNP) is 3 X approximate repeats. The tract at residues 309-417 (DNFGVLGLDL…DVPGQAKDEL (109 aa)) is C-domain. Aspartate 317 lines the an alpha-D-glucoside pocket. Aspartate 328 serves as a coordination point for Ca(2+). Asparagine 344 carries an N-linked (GlcNAc...) asparagine glycan. The segment at 350–417 (TKAAEKQMKD…DVPGQAKDEL (68 aa)) is disordered. Residues 352–379 (AAEKQMKDKQDEEQRLKEEEEDKKRKEE) show a composition bias toward basic and acidic residues. The segment covering 380–409 (EEAEDKEDDEDKDEDEEDEEDKEEDEEEDV) has biased composition (acidic residues). A Prevents secretion from ER motif is present at residues 414–417 (KDEL).

It belongs to the calreticulin family. Monomer. Component of an EIF2 complex at least composed of CELF1/CUGBP1, CALR, CALR3, EIF2S1, EIF2S2, HSP90B1 and HSPA5. Interacts with PDIA3/ERp57 and SPACA9. Interacts with TRIM21. Interacts with NR3C1. Interacts with PPIB. Interacts (via P-domain) with PDIA5. Interacts with GABARAP. Interacts with HLA-E-B2M and HLA-G-B2M complexes. Interacts with HLA-F. Interacts with CLCC1.

The protein localises to the endoplasmic reticulum lumen. Its subcellular location is the cytoplasm. It localises to the cytosol. It is found in the secreted. The protein resides in the extracellular space. The protein localises to the extracellular matrix. Its subcellular location is the cell surface. It localises to the sarcoplasmic reticulum lumen. It is found in the cytoplasmic vesicle. The protein resides in the secretory vesicle. The protein localises to the cortical granule. Its subcellular location is the cytolytic granule. Its function is as follows. Calcium-binding chaperone that promotes folding, oligomeric assembly and quality control in the endoplasmic reticulum (ER) via the calreticulin/calnexin cycle. This lectin interacts transiently with almost all of the monoglucosylated glycoproteins that are synthesized in the ER. Interacts with the DNA-binding domain of NR3C1 and mediates its nuclear export. Involved in maternal gene expression regulation. May participate in oocyte maturation via the regulation of calcium homeostasis. Present in the cortical granules of non-activated oocytes, is exocytosed during the cortical reaction in response to oocyte activation and might participate in the block to polyspermy. This is Calreticulin from Homo sapiens (Human).